A 137-amino-acid polypeptide reads, in one-letter code: Gonadotropin subunit beta-1 (137 aa).

The signal sequence occupies residues Met1 to Ala24. 5 disulfides stabilise this stretch: Cys32/Cys78, Cys46/Cys93, Cys55/Cys108, Cys59/Cys110, and Cys113/Cys120. A glycan (N-linked (GlcNAc...) asparagine) is linked at Asn36.

This sequence belongs to the glycoprotein hormones subunit beta family. Heterodimer of an alpha and a beta chain.

It localises to the secreted. Functionally, involved in gametogenesis and steroidogenesis. The protein is Gonadotropin subunit beta-1 (cgba) of Oncorhynchus masou (Cherry salmon).